The following is a 296-amino-acid chain: NAD kinase (296 aa).

Catalysis depends on Asp73, which acts as the Proton acceptor. NAD(+) contacts are provided by residues 73–74, Lys78, 151–152, Arg178, Asp180, and 191–196; these read DG, NE, and TAHAMS.

It belongs to the NAD kinase family. A divalent metal cation serves as cofactor.

The protein localises to the cytoplasm. The catalysed reaction is NAD(+) + ATP = ADP + NADP(+) + H(+). Functionally, involved in the regulation of the intracellular balance of NAD and NADP, and is a key enzyme in the biosynthesis of NADP. Catalyzes specifically the phosphorylation on 2'-hydroxyl of the adenosine moiety of NAD to yield NADP. In Francisella tularensis subsp. tularensis (strain FSC 198), this protein is NAD kinase.